Consider the following 779-residue polypeptide: Nucleolar complex protein 3 homolog (779 aa).

Disordered regions lie at residues Met1–Thr20 and Asn100–Ser189. Residues Asp114–Val124 show a composition bias toward acidic residues. Positions Glu136–Glu160 are enriched in basic and acidic residues. A compositionally biased stretch (acidic residues) spans Val161 to Asp178. Residues Ala434–Lys474 adopt a coiled-coil conformation.

This sequence belongs to the CBF/MAK21 family.

The protein localises to the nucleus. It is found in the nucleolus. The protein is Nucleolar complex protein 3 homolog of Caenorhabditis briggsae.